The primary structure comprises 358 residues: Alanine racemase (358 aa).

Lys35 acts as the Proton acceptor; specific for D-alanine in catalysis. Lys35 is modified (N6-(pyridoxal phosphate)lysine). Substrate is bound at residue Arg130. Residue Tyr255 is the Proton acceptor; specific for L-alanine of the active site. Met303 serves as a coordination point for substrate.

This sequence belongs to the alanine racemase family. It depends on pyridoxal 5'-phosphate as a cofactor.

It carries out the reaction L-alanine = D-alanine. The protein operates within amino-acid biosynthesis; D-alanine biosynthesis; D-alanine from L-alanine: step 1/1. Its function is as follows. Catalyzes the interconversion of L-alanine and D-alanine. May also act on other amino acids. This Shewanella baltica (strain OS185) protein is Alanine racemase (alr).